Here is a 430-residue protein sequence, read N- to C-terminus: MALRPEKPVWMSQEQYDRQYGKLEEPKPPREESKPGDQAKPSAEPKSGSEEKTEGSSSSTGQGEERPHFKIQKRRHQNYDLEERKKKQQLNKLREEQLKQHDIEMAANKVVNVDQIVREHYNERTFHAKRYNRNYSPIIKLRNFNNAIKYMLIDKYTRPRDVVLELGCGKGGDLRKYGACEISQFIGIDISNESIREAQRRYLNMRDLDYQVILITGDCFGESLGVAVQPFPECRFPCDVVSTQFCLHYAFETEEKARRAILNVSKSLKVGGFFFGTIPDAEFIRYKLNKFSKEVERPSWGNSIYKVVFANNSYQLNDYEFETPYGNMYTYWLEDAIDNVPEYVIPFETLRNLCDEYGMELEMQKPFNKFFVEEIPQWMNKFSPRLREGLQRSDGKYGVEGDEKEAASYFYTVFAFRKVKDYVENAPAHA.

A disordered region spans residues 1-88 (MALRPEKPVW…YDLEERKKKQ (88 aa)). Residues 15–37 (QYDRQYGKLEEPKPPREESKPGD) show a composition bias toward basic and acidic residues. The mRNA cap 0 methyltransferase domain maps to 136-419 (SPIIKLRNFN…FYTVFAFRKV (284 aa)). 145–146 (NN) contacts mRNA. 6 residues coordinate S-adenosyl-L-methionine: K149, G167, D189, D218, Q244, and Y249.

The protein belongs to the class I-like SAM-binding methyltransferase superfamily. mRNA cap 0 methyltransferase family.

The protein localises to the nucleus. It carries out the reaction a 5'-end (5'-triphosphoguanosine)-ribonucleoside in mRNA + S-adenosyl-L-methionine = a 5'-end (N(7)-methyl 5'-triphosphoguanosine)-ribonucleoside in mRNA + S-adenosyl-L-homocysteine. Its function is as follows. Responsible for methylating the 5'-cap structure of mRNAs. In Eremothecium gossypii (strain ATCC 10895 / CBS 109.51 / FGSC 9923 / NRRL Y-1056) (Yeast), this protein is mRNA cap guanine-N(7) methyltransferase (ABD1).